Here is a 1131-residue protein sequence, read N- to C-terminus: Chitin synthase 1 (1131 aa).

The segment covering 1-20 has biased composition (basic and acidic residues); the sequence is MSDQNNRSRNEYHSNRKNEP. Positions 1-22 are disordered; it reads MSDQNNRSRNEYHSNRKNEPSY. Phosphoserine occurs at positions 34, 35, 270, 299, and 318. Residues 282 to 305 form a disordered region; the sequence is YLHDDSRPVNDGKEELDSVKSGYS. At Thr-328 the chain carries Phosphothreonine. Position 358 is a phosphoserine (Ser-358). Helical transmembrane passes span 795-815, 833-853, 866-886, 914-934, 942-962, 1042-1062, and 1101-1121; these read FFYLFFNTLISWFSLSSFFLV, VLSVIFLWLYGICTLSTFILS, VLTCVIFAVMMIYMIFCSIFM, IVISLGSTYCLYLISSIIYLQ, FIQYILLSPSYINVLNIYAFC, LVIIFWVITNFIIVAVVLETG, and ILWLVALSALIRFIGCSIYMI.

The protein belongs to the chitin synthase family.

The protein resides in the cell membrane. It carries out the reaction [(1-&gt;4)-N-acetyl-beta-D-glucosaminyl](n) + UDP-N-acetyl-alpha-D-glucosamine = [(1-&gt;4)-N-acetyl-beta-D-glucosaminyl](n+1) + UDP + H(+). With respect to regulation, requires proteolytic activation. Its function is as follows. Polymerizes chitin, a structural polymer of the cell wall and septum, by transferring the sugar moiety of UDP-GlcNAc to the non-reducing end of the growing chitin polymer. Required for mitotic division septum formation during adverse conditions. This Saccharomyces cerevisiae (strain ATCC 204508 / S288c) (Baker's yeast) protein is Chitin synthase 1 (CHS1).